The chain runs to 219 residues: GTP-binding protein Rab-3D (219 aa).

A2 carries the post-translational modification N-acetylalanine. 29-37 (GNSSVGKTS) contributes to the GDP binding site. GTP contacts are provided by S31, S32, V33, G34, K35, T36, S37, P49, and S53. T36 is a binding site for Mg(2+). Residues 49–58 (PAFVSTVGID) carry the Switch 1 motif. Residues T54 and D77 each contribute to the Mg(2+) site. GTP is bound at residue G80. Positions 80 to 96 (GQERYRTITTAYYRGAM) match the Switch 2 motif. Residue T86 is modified to Phosphothreonine. N135, K136, D138, A166, and K167 together coordinate GTP. Residues 135 to 138 (NKCD) and 165 to 167 (SAK) each bind GDP. S190 carries the post-translational modification Phosphoserine. The disordered stretch occupies residues 190–219 (SLEPSSSPGSNGKGPALGDTPPPQPSSCGC). Residues 193–203 (PSSSPGSNGKG) are compositionally biased toward low complexity. The segment covering 209–219 (TPPPQPSSCGC) has biased composition (pro residues). 2 S-geranylgeranyl cysteine lipidation sites follow: C217 and C219. Cysteine methyl ester; partial is present on C219.

Belongs to the small GTPase superfamily. Rab family. In terms of assembly, interacts with RIMS1, RIMS2, RPH3A and RPH3AL. Interacts with RAB3IP. The GTP-bound form interacts with REP15. Interacts with CHM; phosphorylation at Thr-86 disrupts this interaction. Interacts with MADD (via uDENN domain); the GTP-bound form is preferred for interaction. Requires Mg(2+) as cofactor. In fetal glands the majority of the proteins are methylated, whereas in neonatal and adult glands, only 50% are methylated. In terms of processing, phosphorylation of Thr-86 in the switch II region by LRRK2 prevents the association of RAB regulatory proteins, including CHM. In terms of tissue distribution, highest levels found in lung.

It localises to the cell membrane. It carries out the reaction GTP + H2O = GDP + phosphate + H(+). Its activity is regulated as follows. Regulated by guanine nucleotide exchange factors (GEFs) which promote the exchange of bound GDP for free GTP. Regulated by GTPase activating proteins (GAPs) which increase the GTP hydrolysis activity. Inhibited by GDP dissociation inhibitors (GDIs) which prevent Rab-GDP dissociation. Its function is as follows. The small GTPases Rab are key regulators of intracellular membrane trafficking, from the formation of transport vesicles to their fusion with membranes. Rabs cycle between an inactive GDP-bound form and an active GTP-bound form that is able to recruit to membranes different sets of downstream effectors directly responsible for vesicle formation, movement, tethering and fusion. RAB3D may be involved in the insulin-induced exocytosis of GLUT4-containing vesicles in adipocytes. The chain is GTP-binding protein Rab-3D from Rattus norvegicus (Rat).